The following is a 276-amino-acid chain: Dermonecrotic toxin LarSicTox-alphaIB2c (276 aa).

Residue H5 is part of the active site. E25 and D27 together coordinate Mg(2+). H41 functions as the Nucleophile in the catalytic mechanism. 2 cysteine pairs are disulfide-bonded: C45–C51 and C47–C190. D85 is a binding site for Mg(2+). N253 carries N-linked (GlcNAc...) asparagine glycosylation.

This sequence belongs to the arthropod phospholipase D family. Class II subfamily. Mg(2+) serves as cofactor. As to expression, expressed by the venom gland.

Its subcellular location is the secreted. It carries out the reaction an N-(acyl)-sphingosylphosphocholine = an N-(acyl)-sphingosyl-1,3-cyclic phosphate + choline. The catalysed reaction is an N-(acyl)-sphingosylphosphoethanolamine = an N-(acyl)-sphingosyl-1,3-cyclic phosphate + ethanolamine. It catalyses the reaction a 1-acyl-sn-glycero-3-phosphocholine = a 1-acyl-sn-glycero-2,3-cyclic phosphate + choline. The enzyme catalyses a 1-acyl-sn-glycero-3-phosphoethanolamine = a 1-acyl-sn-glycero-2,3-cyclic phosphate + ethanolamine. Its function is as follows. Dermonecrotic toxins cleave the phosphodiester linkage between the phosphate and headgroup of certain phospholipids (sphingolipid and lysolipid substrates), forming an alcohol (often choline) and a cyclic phosphate. This toxin acts on sphingomyelin (SM). It may also act on ceramide phosphoethanolamine (CPE), lysophosphatidylcholine (LPC) and lysophosphatidylethanolamine (LPE), but not on lysophosphatidylserine (LPS), and lysophosphatidylglycerol (LPG). It acts by transphosphatidylation, releasing exclusively cyclic phosphate products as second products. Induces dermonecrosis, hemolysis, increased vascular permeability, edema, inflammatory response, and platelet aggregation. In Loxosceles arizonica (Arizona brown spider), this protein is Dermonecrotic toxin LarSicTox-alphaIB2c.